A 262-amino-acid chain; its full sequence is Acyl-coenzyme A diphosphatase FITM2 (262 aa).

Residues 1 to 23 (MEHLERCEWLLRGTLVRAAVRRY) lie on the Cytoplasmic side of the membrane. A helical transmembrane segment spans residues 24 to 44 (LPWALVASMLAGSLLKELSPL). The Lumenal segment spans residues 45-57 (PESYLSNKRNVLN). A helical membrane pass occupies residues 58 to 78 (VYFVKVAWAWTFCLLLPFIAL). Residues 79–93 (TNYHLTGKAGLVLRR) are Cytoplasmic-facing. Residues 94 to 114 (LSTLLVGTAIWYICTSIFSNI) form a helical membrane-spanning segment. Residues 115-145 (EHYTGSCYQSPALEGVRKEHQSKQQCHQEGG) are Lumenal-facing. Residues 146–166 (FWHGFDISGHSFLLTFCALMI) form a helical membrane-spanning segment. Residue H155 is part of the active site. Residues 167-190 (VEEMSVLHEVKTDRSHCLHTAITT) lie on the Cytoplasmic side of the membrane. The helical transmembrane segment at 191–211 (LVVALGILTFIWVLMFLCTAV) threads the bilayer. The Lumenal segment spans residues 212–218 (YFHNLSQ). The active site involves H214. A helical transmembrane segment spans residues 219-239 (KVFGTLFGLLSWYGTYGFWYP). Topologically, residues 240–262 (KAFSPGLPPQSCSLNLKQDSYKK) are cytoplasmic.

It belongs to the FIT family. FIT2 subfamily. In terms of tissue distribution, widely expressed.

It localises to the endoplasmic reticulum membrane. The catalysed reaction is an acyl-CoA + H2O = an acyl-4'-phosphopantetheine + adenosine 3',5'-bisphosphate + 2 H(+). The enzyme catalyses (9Z)-octadecenoyl-CoA + H2O = S-(9Z-octadecenoyl)-4'-phosphopantetheine + adenosine 3',5'-bisphosphate + 2 H(+). It catalyses the reaction (5Z,8Z,11Z,14Z)-eicosatetraenoyl-CoA + H2O = S-(5Z,8Z,11Z,14Z-eicosatetraenoyl)-4'-phosphopantetheine + adenosine 3',5'-bisphosphate + 2 H(+). It carries out the reaction hexadecanoyl-CoA + H2O = S-hexadecanoyl-4'-phosphopantetheine + adenosine 3',5'-bisphosphate + 2 H(+). Its function is as follows. Fatty acyl-coenzyme A (CoA) diphosphatase that hydrolyzes fatty acyl-CoA to yield acyl-4'-phosphopantetheine and adenosine 3',5'-bisphosphate. Preferentially hydrolyzes unsaturated long-chain acyl-CoA substrates such as oleoyl-CoA/(9Z)-octadecenoyl-CoA and arachidonoyl-CoA/(5Z,8Z,11Z,14Z)-eicosatetraenoyl-CoA in the endoplasmic reticulum (ER) lumen. This catalytic activity is required for maintaining ER structure and for lipid droplets (LDs) biogenesis, which are lipid storage organelles involved in maintaining lipid and energy homeostasis. Directly binds to diacylglycerol (DAGs) and triacylglycerol, which is also important for LD biogenesis. May support directional budding of nacent LDs from the ER into the cytosol by reducing DAG levels at sites of LD formation. Plays a role in the regulation of cell morphology and cytoskeletal organization. The protein is Acyl-coenzyme A diphosphatase FITM2 of Homo sapiens (Human).